The following is a 230-amino-acid chain: MKTALRGAGRVLLVLVALFVLYQLWIFTLVLWWSHFNPSSTSFMELRLDELQAKRPDVELRHEWVPYDRISIHLKRAVITAEDDTFIDHDGFDWEGMQRALEKNQRKGRAVAGGSTISQQLAKNLFLSPSKSYFRKAQEALITVMIEAVWSKRRILEVYLNVVEWGNGIFGCEAAARRYFRVAASRLGPAEAARLAVMLPNPRRYEKQFGPRLAAHARRIRSRMVYATVP.

Residues 11-31 (VLLVLVALFVLYQLWIFTLVL) form a helical membrane-spanning segment.

It belongs to the glycosyltransferase 51 family.

It is found in the cell inner membrane. The catalysed reaction is [GlcNAc-(1-&gt;4)-Mur2Ac(oyl-L-Ala-gamma-D-Glu-L-Lys-D-Ala-D-Ala)](n)-di-trans,octa-cis-undecaprenyl diphosphate + beta-D-GlcNAc-(1-&gt;4)-Mur2Ac(oyl-L-Ala-gamma-D-Glu-L-Lys-D-Ala-D-Ala)-di-trans,octa-cis-undecaprenyl diphosphate = [GlcNAc-(1-&gt;4)-Mur2Ac(oyl-L-Ala-gamma-D-Glu-L-Lys-D-Ala-D-Ala)](n+1)-di-trans,octa-cis-undecaprenyl diphosphate + di-trans,octa-cis-undecaprenyl diphosphate + H(+). Its pathway is cell wall biogenesis; peptidoglycan biosynthesis. In terms of biological role, peptidoglycan polymerase that catalyzes glycan chain elongation from lipid-linked precursors. The chain is Biosynthetic peptidoglycan transglycosylase from Aromatoleum aromaticum (strain DSM 19018 / LMG 30748 / EbN1) (Azoarcus sp. (strain EbN1)).